A 32-amino-acid chain; its full sequence is uncharacterized protein (32 aa).

This is an uncharacterized protein from Saccharolobus islandicus (Sulfolobus islandicus).